Consider the following 362-residue polypeptide: 3-dehydroquinate synthase (362 aa).

Residues 71–76 (DGEQYK), 105–109 (GVVGD), 129–130 (TT), K142, K151, and 169–172 (CLKT) each bind NAD(+). Positions 184, 248, and 265 each coordinate Zn(2+).

Belongs to the sugar phosphate cyclases superfamily. Dehydroquinate synthase family. Co(2+) is required as a cofactor. It depends on Zn(2+) as a cofactor. Requires NAD(+) as cofactor.

It is found in the cytoplasm. The catalysed reaction is 7-phospho-2-dehydro-3-deoxy-D-arabino-heptonate = 3-dehydroquinate + phosphate. It participates in metabolic intermediate biosynthesis; chorismate biosynthesis; chorismate from D-erythrose 4-phosphate and phosphoenolpyruvate: step 2/7. In terms of biological role, catalyzes the conversion of 3-deoxy-D-arabino-heptulosonate 7-phosphate (DAHP) to dehydroquinate (DHQ). This chain is 3-dehydroquinate synthase, found in Yersinia pseudotuberculosis serotype O:1b (strain IP 31758).